A 426-amino-acid polypeptide reads, in one-letter code: 26S proteasome regulatory subunit 7 (426 aa).

209–216 (GPPGTGKT) lines the ATP pocket.

Belongs to the AAA ATPase family.

The protein resides in the cytoplasm. The protein localises to the nucleus. The 26S proteasome is involved in the ATP-dependent degradation of ubiquitinated proteins. The regulatory (or ATPase) complex confers ATP dependency and substrate specificity to the 26S complex. The sequence is that of 26S proteasome regulatory subunit 7 (RPT1) from Spinacia oleracea (Spinach).